Reading from the N-terminus, the 634-residue chain is Probable beta-glucosidase C (634 aa).

The N-terminal stretch at 1 to 19 is a signal peptide; that stretch reads MRIDCTVASLTALASGCQA. Residues N90, N112, N219, and N270 are each glycosylated (N-linked (GlcNAc...) asparagine). D337 is an active-site residue. N-linked (GlcNAc...) asparagine glycans are attached at residues N360, N476, N484, and N524.

This sequence belongs to the glycosyl hydrolase 3 family.

The protein resides in the secreted. The catalysed reaction is Hydrolysis of terminal, non-reducing beta-D-glucosyl residues with release of beta-D-glucose.. Its pathway is glycan metabolism; cellulose degradation. Its function is as follows. Beta-glucosidases are one of a number of cellulolytic enzymes involved in the degradation of cellulosic biomass. Catalyzes the last step releasing glucose from the inhibitory cellobiose. This is Probable beta-glucosidase C (bglC) from Aspergillus flavus (strain ATCC 200026 / FGSC A1120 / IAM 13836 / NRRL 3357 / JCM 12722 / SRRC 167).